Here is a 207-residue protein sequence, read N- to C-terminus: Dephospho-CoA kinase (207 aa).

Residues 10 to 207 (ILGLTGGIGS…FYLTLSGGQS (198 aa)) form the DPCK domain. Residue 18 to 23 (GSGKSA) coordinates ATP.

This sequence belongs to the CoaE family.

The protein resides in the cytoplasm. The catalysed reaction is 3'-dephospho-CoA + ATP = ADP + CoA + H(+). The protein operates within cofactor biosynthesis; coenzyme A biosynthesis; CoA from (R)-pantothenate: step 5/5. In terms of biological role, catalyzes the phosphorylation of the 3'-hydroxyl group of dephosphocoenzyme A to form coenzyme A. The protein is Dephospho-CoA kinase of Pseudomonas fluorescens (strain Pf0-1).